Consider the following 233-residue polypeptide: H-2 class II histocompatibility antigen, A-R alpha chain (233 aa).

The interval 1-88 is alpha-1; the sequence is EDDIEADHVG…KRSNFTPAAN (88 aa). Over 1 to 195 the chain is Extracellular; that stretch reads EDDIEADHVG…IPAPMSELTE (195 aa). Residues 89-182 form an alpha-2 region; sequence EAPQATVFPK…GLEEPVLKHW (94 aa). The 93-residue stretch at 91-183 folds into the Ig-like C1-type domain; sequence PQATVFPKSP…LEEPVLKHWE (93 aa). Cys111 and Cys167 are disulfide-bonded. Asn122 carries N-linked (GlcNAc...) asparagine glycosylation. The connecting peptide stretch occupies residues 183–195; sequence EPEIPAPMSELTE. The chain crosses the membrane as a helical span at residues 196–221; that stretch reads TVVCALGLSVGLVGIVVGTIFIIQGL. At 222 to 233 the chain is on the cytoplasmic side; the sequence is RSGGTSRHPGPL.

It belongs to the MHC class II family.

Its subcellular location is the membrane. This Mus musculus (Mouse) protein is H-2 class II histocompatibility antigen, A-R alpha chain (H2-Aa).